Here is a 600-residue protein sequence, read N- to C-terminus: Probable translation initiation factor IF-2 (600 aa).

In terms of domain architecture, tr-type G spans 10–227 (LRQPIVVVLG…LLAGLTQRYL (218 aa)). A G1 region spans residues 19–26 (GHVDHGKT). GTP is bound at residue 19-26 (GHVDHGKT). The interval 44-48 (EMTQE) is G2. The tract at residues 83–86 (DTPG) is G3. Residues 83 to 87 (DTPGH) and 137 to 140 (NKID) each bind GTP. The interval 137–140 (NKID) is G4. The tract at residues 205-207 (SAK) is G5.

The protein belongs to the TRAFAC class translation factor GTPase superfamily. Classic translation factor GTPase family. IF-2 subfamily.

Functionally, function in general translation initiation by promoting the binding of the formylmethionine-tRNA to ribosomes. Seems to function along with eIF-2. This chain is Probable translation initiation factor IF-2, found in Saccharolobus solfataricus (strain ATCC 35092 / DSM 1617 / JCM 11322 / P2) (Sulfolobus solfataricus).